Here is a 119-residue protein sequence, read N- to C-terminus: MKRIAFVFSTAPHGTAAGREGLDALLATSALTDDLAVFFIADGVFQLLSGQKPDAVLARDYIATFKLLGLYDIEQCWVCAASLRERGLDPQTPFVVEATPLEADALRRELANYDVILRF.

The protein belongs to the DsrF/TusC family. As to quaternary structure, heterohexamer, formed by a dimer of trimers. The hexameric TusBCD complex contains 2 copies each of TusB, TusC and TusD. The TusBCD complex interacts with TusE.

It localises to the cytoplasm. Its function is as follows. Part of a sulfur-relay system required for 2-thiolation of 5-methylaminomethyl-2-thiouridine (mnm(5)s(2)U) at tRNA wobble positions. In Shigella boydii serotype 18 (strain CDC 3083-94 / BS512), this protein is Protein TusC.